Consider the following 328-residue polypeptide: DNA-directed RNA polymerase subunit alpha (328 aa).

The tract at residues Met1 to Arg234 is alpha N-terminal domain (alpha-NTD). The segment at Phe248–Asp328 is alpha C-terminal domain (alpha-CTD).

This sequence belongs to the RNA polymerase alpha chain family. As to quaternary structure, homodimer. The RNAP catalytic core consists of 2 alpha, 1 beta, 1 beta' and 1 omega subunit. When a sigma factor is associated with the core the holoenzyme is formed, which can initiate transcription.

It carries out the reaction RNA(n) + a ribonucleoside 5'-triphosphate = RNA(n+1) + diphosphate. Functionally, DNA-dependent RNA polymerase catalyzes the transcription of DNA into RNA using the four ribonucleoside triphosphates as substrates. This chain is DNA-directed RNA polymerase subunit alpha, found in Haemophilus influenzae (strain ATCC 51907 / DSM 11121 / KW20 / Rd).